The chain runs to 225 residues: Cytidylate kinase (225 aa).

11-19 (GPAAAGKST) is an ATP binding site.

This sequence belongs to the cytidylate kinase family. Type 1 subfamily.

It is found in the cytoplasm. The enzyme catalyses CMP + ATP = CDP + ADP. It carries out the reaction dCMP + ATP = dCDP + ADP. The chain is Cytidylate kinase from Bacillus cereus (strain AH187).